The primary structure comprises 277 residues: Ribosomal RNA small subunit methyltransferase A (277 aa).

6 residues coordinate S-adenosyl-L-methionine: asparagine 20, leucine 22, glycine 47, glutamate 68, aspartate 93, and asparagine 114.

Belongs to the class I-like SAM-binding methyltransferase superfamily. rRNA adenine N(6)-methyltransferase family. RsmA subfamily.

The protein localises to the cytoplasm. It carries out the reaction adenosine(1518)/adenosine(1519) in 16S rRNA + 4 S-adenosyl-L-methionine = N(6)-dimethyladenosine(1518)/N(6)-dimethyladenosine(1519) in 16S rRNA + 4 S-adenosyl-L-homocysteine + 4 H(+). Specifically dimethylates two adjacent adenosines (A1518 and A1519) in the loop of a conserved hairpin near the 3'-end of 16S rRNA in the 30S particle. May play a critical role in biogenesis of 30S subunits. This chain is Ribosomal RNA small subunit methyltransferase A, found in Aliivibrio salmonicida (strain LFI1238) (Vibrio salmonicida (strain LFI1238)).